Consider the following 368-residue polypeptide: Flagellar P-ring protein (368 aa).

An N-terminal signal peptide occupies residues 1-22 (MLIPLARAVLALELLGAGAAHA).

The protein belongs to the FlgI family. As to quaternary structure, the basal body constitutes a major portion of the flagellar organelle and consists of four rings (L,P,S, and M) mounted on a central rod.

It is found in the periplasm. The protein localises to the bacterial flagellum basal body. Assembles around the rod to form the L-ring and probably protects the motor/basal body from shearing forces during rotation. The chain is Flagellar P-ring protein from Bordetella pertussis (strain Tohama I / ATCC BAA-589 / NCTC 13251).